The sequence spans 1032 residues: Importin beta-like protein KAP120 (1032 aa).

Ala2 carries the post-translational modification N-acetylalanine. The region spanning 31–103 (AEQQLRQWET…RGRLFEMIDE (73 aa)) is the Importin N-terminal domain.

Belongs to the importin beta family. In terms of assembly, interacts with GTP-bound GSP1 and RFP1. Associates with the nuclear pore complex.

Its subcellular location is the cytoplasm. It localises to the nucleus. Its function is as follows. Functions in nuclear protein import as nuclear transport receptor. Serves as receptor for nuclear localization signals (NLS) in cargo substrates. Thought to mediate docking of the importin/substrate complex to the nuclear pore complex (NPC) through binding to nucleoporin and the complex is subsequently translocated through the pore by an energy requiring, RAN-dependent mechanism. Required for nuclear import of Ho endonuclease and RFP1, and involved in rRNA-processing and assembly or export of 60S ribosomal subunits. In Saccharomyces cerevisiae (strain ATCC 204508 / S288c) (Baker's yeast), this protein is Importin beta-like protein KAP120 (KAP120).